The primary structure comprises 376 residues: Fibromodulin (376 aa).

Residues 1 to 18 (MQWASVLLLAGLCSLSQG) form the signal peptide. Q19 is subject to Pyrrolidone carboxylic acid. Sulfotyrosine occurs at positions 20, 38, 53, 55, 63, and 65. The LRRNT domain maps to 67–105 (APPPPEPRDCPQECDCPPNFPTAMYCDNRNLKYLPFVPS). LRR repeat units lie at residues 106 to 127 (RMKYVYFQNNQISAIQEGVFDN), 130 to 151 (GLLWVALHGNQITSDKVGRKVF), 156 to 176 (HLERLYLDHNNLTRMPGPLPR), 177 to 198 (SLRELHLDHNQISRVPNNALEG), 201 to 222 (NLTALYLHHNEIQEVGSSMRGL), 224 to 245 (SLILLDLSYNHLRRVPDGLPSA), 246 to 266 (LEQLYLEHNNVYTVPDSYFRG), and 269 to 289 (KLLYVRLSHNSLTNNGLATNT). N127 is a glycosylation site (N-linked (GlcNAc...) (keratan sulfate) asparagine). N-linked (GlcNAc...) (keratan sulfate) asparagine glycosylation is present at N166. A glycan (N-linked (GlcNAc...) (keratan sulfate) asparagine) is linked at N201. N291 carries N-linked (GlcNAc...) (keratan sulfate) asparagine glycosylation. LRR repeat units follow at residues 294–315 (SLLELDLSYNQLQKIPPVNTNL) and 316–335 (ENLYLQGNRINEFSISSFCT). A disulfide bridge connects residues C334 and C367. The N-linked (GlcNAc...) asparagine glycan is linked to N341. One copy of the LRR 11 repeat lies at 344–367 (KLQVLRLDGNEIKRSAMPVDAPLC).

The protein belongs to the small leucine-rich proteoglycan (SLRP) family. SLRP class II subfamily. In terms of assembly, binds to type I and type II collagen. Post-translationally, binds keratan sulfate chains. In terms of processing, sulfated on tyrosine residue(s). As to expression, highest levels observed in knee epiphysis, in calvarial and diaphyseal bone, in nasal and costal cartilage, in the eye, and in bladder. In mature knee joint it is mostly present in the proliferating zone of growth plate. It is also observed in ligaments, especially at insertion sites, in the junction between meniscus and joint capsule, in the perimysium of skeletal muscle and in the periosteum.

It localises to the secreted. Its subcellular location is the extracellular space. The protein localises to the extracellular matrix. Functionally, affects the rate of fibrils formation. May have a primary role in collagen fibrillogenesis. This Mus musculus (Mouse) protein is Fibromodulin (Fmod).